The primary structure comprises 406 residues: Putative nickel insertion protein (406 aa).

Belongs to the LarC family.

The polypeptide is Putative nickel insertion protein (Thermomicrobium roseum (strain ATCC 27502 / DSM 5159 / P-2)).